The primary structure comprises 237 residues: Segregation and condensation protein A (237 aa).

It belongs to the ScpA family. As to quaternary structure, component of a cohesin-like complex composed of ScpA, ScpB and the Smc homodimer, in which ScpA and ScpB bind to the head domain of Smc. The presence of the three proteins is required for the association of the complex with DNA.

Its subcellular location is the cytoplasm. Functionally, participates in chromosomal partition during cell division. May act via the formation of a condensin-like complex containing Smc and ScpB that pull DNA away from mid-cell into both cell halves. This is Segregation and condensation protein A from Streptococcus thermophilus (strain ATCC BAA-250 / LMG 18311).